The sequence spans 119 residues: Large ribosomal subunit protein bL20 (119 aa).

This sequence belongs to the bacterial ribosomal protein bL20 family.

Binds directly to 23S ribosomal RNA and is necessary for the in vitro assembly process of the 50S ribosomal subunit. It is not involved in the protein synthesizing functions of that subunit. This Rhodopseudomonas palustris (strain BisB5) protein is Large ribosomal subunit protein bL20.